Here is a 463-residue protein sequence, read N- to C-terminus: Putative glycine--tRNA ligase, cytoplasmic (463 aa).

The disordered stretch occupies residues 25–54; sequence TLEDSHAAKPETNAAIELPNKSKPEKSAVE. The segment covering 44–54 has biased composition (basic and acidic residues); sequence NKSKPEKSAVE. Residues arginine 153 and glutamate 239 each contribute to the substrate site. ATP-binding positions include 271–273 and 281–286; these read RNE and LRTREF. Substrate-binding positions include 286 to 290 and asparagine 376; that span reads FTLAE. 398-399 serves as a coordination point for ATP; that stretch reads EC.

The protein belongs to the class-II aminoacyl-tRNA synthetase family. As to quaternary structure, homodimer.

The protein localises to the cytoplasm. The enzyme catalyses tRNA(Gly) + glycine + ATP = glycyl-tRNA(Gly) + AMP + diphosphate. Catalyzes the attachment of glycine to tRNA(Gly). Is also able produce diadenosine tetraphosphate (Ap4A), a universal pleiotropic signaling molecule needed for cell regulation pathways, by direct condensation of 2 ATPs. The polypeptide is Putative glycine--tRNA ligase, cytoplasmic (Arabidopsis thaliana (Mouse-ear cress)).